A 205-amino-acid chain; its full sequence is G-protein coupled receptor (205 aa).

The next 5 helical transmembrane spans lie at 40 to 60 (GITLTASVPMIIIVITTMILY), 71 to 91 (FYVITLFASDFVLMWCVFFMT), 107 to 127 (LVYFIYHAVCSYSISMLAIIA), 151 to 171 (IGILLLASSMCAIPTALFVQI), and 185 to 205 (LSSPKAYELFLAVKIVFSFIW). A disulfide bond links Cys-105 and Cys-181.

It belongs to the G-protein coupled receptor 1 family.

It is found in the host membrane. In Human herpesvirus 6B (strain Z29) (HHV-6 variant B), this protein is G-protein coupled receptor (U12).